A 780-amino-acid chain; its full sequence is ATP-dependent 6-phosphofructokinase, muscle type (780 aa).

Position 2 is an N-acetylthreonine (T2). An N-terminal catalytic PFK domain 1 region spans residues 2 to 390; sequence THEEHHAAKT…NWEVYKLLAH (389 aa). ATP is bound by residues G25, 88-89, and 118-121; these read RC and GDGS. D119 contacts Mg(2+). A Phosphoserine modification is found at S133. Substrate-binding positions include 164–166, R201, 208–210, E264, R292, and 298–301; these read SID, MGR, and HVQR. D166 serves as the catalytic Proton acceptor. S377 is modified (phosphoserine). Residues 391–401 form an interdomain linker region; the sequence is VRPPVSKSGSH. A C-terminal regulatory PFK domain 2 region spans residues 402 to 780; that stretch reads TVAVMNVGAP…TRKRSGEAAV (379 aa). Beta-D-fructose 2,6-bisphosphate contacts are provided by residues R471 and 528–532; that span reads TVSNN. S530 carries an O-linked (GlcNAc) serine glycan. K557 carries the N6-(2-hydroxyisobutyryl)lysine modification. Residues R566, 573–575, E629, R655, and 661–664 contribute to the beta-D-fructose 2,6-bisphosphate site; these read MGG and HMQQ. S667 is modified (phosphoserine). Residue R735 participates in beta-D-fructose 2,6-bisphosphate binding. At S775 the chain carries Phosphoserine.

The protein belongs to the phosphofructokinase type A (PFKA) family. ATP-dependent PFK group I subfamily. Eukaryotic two domain clade 'E' sub-subfamily. In terms of assembly, homo- and heterotetramers. Phosphofructokinase (PFK) enzyme functions as a tetramer composed of different combinations of 3 types of subunits, called PFKM (where M stands for Muscle), PFKL (Liver) and PFKP (Platelet). The composition of the PFK tetramer differs according to the tissue type it is present in. In muscles, it is composed of 4 PFKM subunits (also called M4). In the liver, the predominant form is a tetramer of PFKL subunits (L4). In erythrocytes, both PFKM and PFKL subunits randomly tetramerize to form M4, L4 and other combinations (ML3, M2L2, M3L). The kinetic and regulatory properties of the tetrameric enzyme are dependent on the subunit composition, hence can vary across tissues. Interacts (via C-terminus) with HK1 (via N-terminal spermatogenic cell-specific region). Requires Mg(2+) as cofactor. GlcNAcylation decreases enzyme activity.

It localises to the cytoplasm. The catalysed reaction is beta-D-fructose 6-phosphate + ATP = beta-D-fructose 1,6-bisphosphate + ADP + H(+). Its pathway is carbohydrate degradation; glycolysis; D-glyceraldehyde 3-phosphate and glycerone phosphate from D-glucose: step 3/4. Its activity is regulated as follows. Allosterically activated by ADP, AMP, or fructose 2,6-bisphosphate, and allosterically inhibited by ATP or citrate. Its function is as follows. Catalyzes the phosphorylation of D-fructose 6-phosphate to fructose 1,6-bisphosphate by ATP, the first committing step of glycolysis. The sequence is that of ATP-dependent 6-phosphofructokinase, muscle type (PFKM) from Homo sapiens (Human).